Here is a 334-residue protein sequence, read N- to C-terminus: Glycerol-3-phosphate dehydrogenase [NAD(P)+] (334 aa).

NADPH is bound by residues W13, R33, and K106. Residues K106, G137, and S139 each contribute to the sn-glycerol 3-phosphate site. A141 contacts NADPH. Residues K192, D245, S255, R256, and N257 each coordinate sn-glycerol 3-phosphate. K192 acts as the Proton acceptor in catalysis. NADPH is bound at residue R256. The NADPH site is built by V280 and E282.

It belongs to the NAD-dependent glycerol-3-phosphate dehydrogenase family.

It localises to the cytoplasm. The enzyme catalyses sn-glycerol 3-phosphate + NAD(+) = dihydroxyacetone phosphate + NADH + H(+). It carries out the reaction sn-glycerol 3-phosphate + NADP(+) = dihydroxyacetone phosphate + NADPH + H(+). Its pathway is membrane lipid metabolism; glycerophospholipid metabolism. Its function is as follows. Catalyzes the reduction of the glycolytic intermediate dihydroxyacetone phosphate (DHAP) to sn-glycerol 3-phosphate (G3P), the key precursor for phospholipid synthesis. The polypeptide is Glycerol-3-phosphate dehydrogenase [NAD(P)+] (Chlamydia pneumoniae (Chlamydophila pneumoniae)).